Here is a 93-residue protein sequence, read N- to C-terminus: Large ribosomal subunit protein bL31B (93 aa).

The protein belongs to the bacterial ribosomal protein bL31 family. Type B subfamily. In terms of assembly, part of the 50S ribosomal subunit.

In Psychrobacter arcticus (strain DSM 17307 / VKM B-2377 / 273-4), this protein is Large ribosomal subunit protein bL31B.